We begin with the raw amino-acid sequence, 336 residues long: Mitochondrial fission regulator 2 (336 aa).

Residues 139–166 (QPDALLKISALEEELQRLRAQIATIITA) are a coiled coil. Positions 296-336 (HRQRDDSFGKENHSAEPSPFSSPDTPRIFQHTRRSQGRIHL) are disordered. Basic and acidic residues predominate over residues 297-309 (RQRDDSFGKENHS). Residues 325–336 (QHTRRSQGRIHL) show a composition bias toward basic residues.

The protein belongs to the MTFR1 family.

The protein localises to the mitochondrion. In terms of biological role, may play a role in mitochondrial aerobic respiration. Can also promote mitochondrial fission. The chain is Mitochondrial fission regulator 2 (mtfr2) from Danio rerio (Zebrafish).